We begin with the raw amino-acid sequence, 684 residues long: Beta-mannosyltransferase 1 (684 aa).

Residues 1–28 (MDKFIQSFSHQYLDSSSSLKLTARRKRK) are Cytoplasmic-facing. The chain crosses the membrane as a helical span at residues 29-49 (LTILGLFLFSLISLMIIISYS). The Extracellular segment spans residues 50-684 (NNNILPGLSG…KFCKIYGETF (635 aa)). Residue Asn297 is glycosylated (N-linked (GlcNAc...) asparagine).

This sequence belongs to the BMT family.

Its subcellular location is the membrane. Its function is as follows. Beta-mannosyltransferase involved in cell wall biosynthesis. Required for addition of the first beta-mannose residue to acid-stable fraction of cell wall phosphopeptidomannan. Plays a key role in reducing host inflammatory response. The sequence is that of Beta-mannosyltransferase 1 (BMT1) from Candida albicans (strain SC5314 / ATCC MYA-2876) (Yeast).